The primary structure comprises 104 residues: Type VII secretion system extracellular protein B (104 aa).

It belongs to the WXG100 family. In terms of assembly, homodimer. When mixed with EsxA does not form heterodimers. Forms heterodimers with EsxD.

It is found in the secreted. Its function is as follows. Virulence factor that is important for the establishment of infection in the host. EsxB is required for EsxA synthesis as well as secretion. Mediates together with EsxA the release of S.aureus from the host cell. Also inhibits host cytokine production and thus modulates dendritic cell-mediated immunity. The polypeptide is Type VII secretion system extracellular protein B (Staphylococcus aureus (strain USA300)).